The sequence spans 198 residues: NAD(P)H dehydrogenase (quinone) (198 aa).

Residues 4–189 (VLVLYYSMYG…SIARYQGEYV (186 aa)) enclose the Flavodoxin-like domain. Residues 10-15 (SMYGHI) and 78-80 (TRF) contribute to the FMN site. Tyr12 contributes to the NAD(+) binding site. Trp98 contacts substrate. FMN is bound by residues 113 to 118 (STGTGG) and His133.

This sequence belongs to the WrbA family. It depends on FMN as a cofactor.

The enzyme catalyses a quinone + NADH + H(+) = a quinol + NAD(+). It carries out the reaction a quinone + NADPH + H(+) = a quinol + NADP(+). The protein is NAD(P)H dehydrogenase (quinone) of Escherichia fergusonii (strain ATCC 35469 / DSM 13698 / CCUG 18766 / IAM 14443 / JCM 21226 / LMG 7866 / NBRC 102419 / NCTC 12128 / CDC 0568-73).